A 433-amino-acid chain; its full sequence is Adenylosuccinate synthetase (433 aa).

GTP contacts are provided by residues 18–24 and 46–48; these read GDEGKGK and GHT. Aspartate 19 acts as the Proton acceptor in catalysis. Mg(2+) is bound by residues aspartate 19 and glycine 46. IMP contacts are provided by residues 19–22, 44–47, threonine 136, arginine 150, glutamine 229, threonine 244, and arginine 308; these read DEGK and NAGH. Residue histidine 47 is the Proton donor of the active site. 304–310 provides a ligand contact to substrate; that stretch reads VTTKRMR. GTP-binding positions include arginine 310, 336 to 338, and 420 to 422; these read KID and GTG.

The protein belongs to the adenylosuccinate synthetase family. In terms of assembly, homodimer. It depends on Mg(2+) as a cofactor.

The protein resides in the cytoplasm. The enzyme catalyses IMP + L-aspartate + GTP = N(6)-(1,2-dicarboxyethyl)-AMP + GDP + phosphate + 2 H(+). It participates in purine metabolism; AMP biosynthesis via de novo pathway; AMP from IMP: step 1/2. Its function is as follows. Plays an important role in the de novo pathway and in the salvage pathway of purine nucleotide biosynthesis. Catalyzes the first committed step in the biosynthesis of AMP from IMP. The chain is Adenylosuccinate synthetase from Schistosoma japonicum (Blood fluke).